We begin with the raw amino-acid sequence, 157 residues long: Jacalin-related lectin 15 (157 aa).

Residues 13 to 152 (ADKLEAKGGN…LTSLGAYFAP (140 aa)) form the Jacalin-type lectin domain.

Belongs to the jacalin lectin family. In terms of tissue distribution, expressed in stems, leaves and flowers. Not detected in roots.

Confers broad resistance to potexviruses. Inhibits virus accumulation at the cellular level. This Arabidopsis thaliana (Mouse-ear cress) protein is Jacalin-related lectin 15 (JAL15).